The following is a 458-amino-acid chain: Chromosomal replication initiator protein DnaA (458 aa).

Residues 1 to 93 (MKTELSEVWQ…NVIEDPAAEP (93 aa)) are domain I, interacts with DnaA modulators. Residues 94 to 119 (VDAPNVADLPAGTSAPAAEQNARLLG) are domain II. The interval 120–336 (YINPKYTFET…GALTRVVAYA (217 aa)) is domain III, AAA+ region. Residues glycine 164, glycine 166, lysine 167, and threonine 168 each coordinate ATP. Residues 337-458 (NMLKCPLTYD…EQLIARIRAE (122 aa)) form a domain IV, binds dsDNA region.

This sequence belongs to the DnaA family. In terms of assembly, oligomerizes as a right-handed, spiral filament on DNA at oriC.

It is found in the cytoplasm. Its function is as follows. Plays an essential role in the initiation and regulation of chromosomal replication. ATP-DnaA binds to the origin of replication (oriC) to initiate formation of the DNA replication initiation complex once per cell cycle. Binds the DnaA box (a 9 base pair repeat at the origin) and separates the double-stranded (ds)DNA. Forms a right-handed helical filament on oriC DNA; dsDNA binds to the exterior of the filament while single-stranded (ss)DNA is stabiized in the filament's interior. The ATP-DnaA-oriC complex binds and stabilizes one strand of the AT-rich DNA unwinding element (DUE), permitting loading of DNA polymerase. After initiation quickly degrades to an ADP-DnaA complex that is not apt for DNA replication. Binds acidic phospholipids. The sequence is that of Chromosomal replication initiator protein DnaA from Symbiobacterium thermophilum (strain DSM 24528 / JCM 14929 / IAM 14863 / T).